The primary structure comprises 535 residues: Peptide chain release factor 3 (535 aa).

The region spanning 8 to 277 (KRRRTFAIIS…TLVELAPPPG (270 aa)) is the tr-type G domain. Residues 17–24 (SHPDAGKT), 85–89 (DTPGH), and 139–142 (NKLD) contribute to the GTP site.

This sequence belongs to the TRAFAC class translation factor GTPase superfamily. Classic translation factor GTPase family. PrfC subfamily.

It is found in the cytoplasm. Its function is as follows. Increases the formation of ribosomal termination complexes and stimulates activities of RF-1 and RF-2. It binds guanine nucleotides and has strong preference for UGA stop codons. It may interact directly with the ribosome. The stimulation of RF-1 and RF-2 is significantly reduced by GTP and GDP, but not by GMP. In Nitrosomonas europaea (strain ATCC 19718 / CIP 103999 / KCTC 2705 / NBRC 14298), this protein is Peptide chain release factor 3.